The primary structure comprises 1053 residues: Integrin alpha-3 (1053 aa).

The N-terminal stretch at 1–32 (MGPGPCRVPRAPGWLLRALALMVAACGRVAFA) is a signal peptide. At 33–993 (FNLDTRFLVV…LVEELPAEIE (961 aa)) the chain is on the extracellular side. FG-GAP repeat units follow at residues 38–103 (RFLV…KDDC), 110–171 (EKSD…DLQL), 185–235 (CNSN…WDLS), 236–293 (EYSY…GGDL), 294–355 (QRKQ…ASFP), 357–412 (QPSL…GLLR), and 416–478 (QIIH…VARP). Residue Asn86 is glycosylated (N-linked (GlcNAc...) asparagine). 3 disulfides stabilise this stretch: Cys94/Cys103, Cys140/Cys162, and Cys185/Cys197. Disulfide bonds link Cys486–Cys491 and Cys497–Cys551. N-linked (GlcNAc...) asparagine glycosylation is found at Asn501, Asn512, Asn574, and Asn606. A disulfide bridge links Cys616 with Cys622. N-linked (GlcNAc...) asparagine glycosylation is found at Asn657, Asn699, Asn843, and Asn859. Cys695 and Cys704 are oxidised to a cystine. Cystine bridges form between Cys848–Cys906 and Cys913–Cys918. The tract at residues 865 to 890 (PGVTPLSPQRRRRQLDPGGDQSSPPV) is disordered. Residues Asn925, Asn928, Asn937, and Asn971 are each glycosylated (N-linked (GlcNAc...) asparagine). Residues 994–1021 (LWLVLVAVGAGLLLLGLIILLLWKCGFF) traverse the membrane as a helical segment. Cys1018 is lipidated: S-palmitoyl cysteine. Residues 1022-1053 (KRARTRALYEAKRQKAEMKSQPSETERLTDDY) are Cytoplasmic-facing.

This sequence belongs to the integrin alpha chain family. Heterodimer of an alpha and a beta subunit. The alpha subunit is composed of a heavy and a light chain linked by a disulfide bond. Alpha-3 associates with beta-1. Interacts with HPS5. Interacts with FAP (seprase); the interaction occurs at the cell surface of invadopodia membrane in a collagen-dependent manner. Isoform 1 and isoform 2 are expressed in heart and brain. Only isoform 1 is detected in lung.

It localises to the cell membrane. The protein resides in the cell projection. Its subcellular location is the invadopodium membrane. The protein localises to the filopodium membrane. Integrin alpha-3/beta-1 is a receptor for fibronectin, laminin, collagen, epiligrin, thrombospondin and CSPG4. Integrin alpha-3/beta-1 provides a docking site for FAP (seprase) at invadopodia plasma membranes in a collagen-dependent manner and hence may participate in the adhesion, formation of invadopodia and matrix degradation processes, promoting cell invasion. Alpha-3/beta-1 may mediate with LGALS3 the stimulation by CSPG4 of endothelial cells migration. This Mus musculus (Mouse) protein is Integrin alpha-3 (Itga3).